The chain runs to 633 residues: NBPF family member NBPF3 (633 aa).

Residues 15 to 52 (RGPDVETSPFGAPRAASHGVGRHQELRDPTVPGPTSSA) form a disordered region. Residues 127 to 186 (LRDERLLTEEKLAEELGQAEELRQYKVLVHSQERELTQLREKLQEGRDASRSLNQHLQAL) adopt a coiled-coil conformation. Olduvai domains lie at 221-313 (ENDD…CIIP), 314-402 (ENES…ATSP), 405-460 (SREL…LDLD), 461-552 (RMKK…PPCP), and 555-633 (NEVL…IFPH). Positions 316 to 326 (ESDHEQEEEKG) are enriched in basic and acidic residues. The segment at 316–370 (ESDHEQEEEKGPVSPRNLQESEEEEAPQESWDEGDWTLSIPPDMSASYQSDRSTF) is disordered. Positions 335–350 (ESEEEEAPQESWDEGD) are enriched in acidic residues. Positions 463–484 (KKDQEEEEDQGPPCPRLSRELP) are disordered.

Belongs to the NBPF family. Expressed in testis and fetal heart, as well as in non small cell lung carcinoma and neuroblastoma cell line.

It localises to the cytoplasm. This chain is NBPF family member NBPF3, found in Homo sapiens (Human).